The following is a 395-amino-acid chain: Elongation factor Tu (395 aa).

The tr-type G domain occupies 10-204; sequence KTHANIGTIG…AVDEYIPTPE (195 aa). Positions 19–26 are G1; the sequence is GHVDHGKT. Residue 19-26 participates in GTP binding; the sequence is GHVDHGKT. Thr26 provides a ligand contact to Mg(2+). The interval 60-64 is G2; the sequence is GITIN. The tract at residues 81-84 is G3; it reads DCPG. GTP contacts are provided by residues 81–85 and 136–139; these read DCPGH and NKVD. The segment at 136–139 is G4; sequence NKVD. Positions 174–176 are G5; sequence SAL.

This sequence belongs to the TRAFAC class translation factor GTPase superfamily. Classic translation factor GTPase family. EF-Tu/EF-1A subfamily. As to quaternary structure, monomer.

The protein resides in the cytoplasm. It carries out the reaction GTP + H2O = GDP + phosphate + H(+). In terms of biological role, GTP hydrolase that promotes the GTP-dependent binding of aminoacyl-tRNA to the A-site of ribosomes during protein biosynthesis. The polypeptide is Elongation factor Tu (Macrococcus caseolyticus (strain JCSC5402) (Macrococcoides caseolyticum)).